The sequence spans 130 residues: Ribonuclease P protein component 2 (130 aa).

This sequence belongs to the eukaryotic/archaeal RNase P protein component 2 family. Consists of a catalytic RNA component and at least 4-5 protein subunits.

The protein resides in the cytoplasm. The catalysed reaction is Endonucleolytic cleavage of RNA, removing 5'-extranucleotides from tRNA precursor.. Its function is as follows. Part of ribonuclease P, a protein complex that generates mature tRNA molecules by cleaving their 5'-ends. The sequence is that of Ribonuclease P protein component 2 from Methanococcus maripaludis (strain C5 / ATCC BAA-1333).